The following is a 244-amino-acid chain: Ureidoacrylate amidohydrolase RutB (244 aa).

The active-site Proton acceptor is the Asp-38. Lys-147 is an active-site residue. Cys-180 functions as the Nucleophile in the catalytic mechanism.

It belongs to the isochorismatase family. RutB subfamily.

It catalyses the reaction (Z)-3-ureidoacrylate + H2O + H(+) = (Z)-3-aminoacrylate + NH4(+) + CO2. The enzyme catalyses (Z)-3-ureidoacrylate + H2O = (Z)-3-aminoacrylate + carbamate + H(+). The catalysed reaction is (Z)-2-methylureidoacrylate + H2O + H(+) = (Z)-2-methylaminoacrylate + NH4(+) + CO2. Hydrolyzes ureidoacrylate to form aminoacrylate and carbamate. The carbamate hydrolyzes spontaneously, thereby releasing one of the nitrogen atoms of the pyrimidine ring as ammonia and one of its carbon atoms as CO2. The sequence is that of Ureidoacrylate amidohydrolase RutB from Shigella flexneri serotype X (strain 2002017).